The chain runs to 219 residues: UPF0173 metal-dependent hydrolase LSL_0324 (219 aa).

This sequence belongs to the UPF0173 family.

The chain is UPF0173 metal-dependent hydrolase LSL_0324 from Ligilactobacillus salivarius (strain UCC118) (Lactobacillus salivarius).